The primary structure comprises 401 residues: Chaperone protein DnaJ (401 aa).

The 66-residue stretch at 4-69 (DYYEVLGVSR…DKRRRYDQFG (66 aa)) folds into the J domain. Residues 156 to 237 (GVEKTLKIKK…CYGEGIKQGD (82 aa)) form a CR-type zinc finger. Residues cysteine 169, cysteine 172, cysteine 185, cysteine 188, cysteine 211, cysteine 214, cysteine 225, and cysteine 228 each coordinate Zn(2+). CXXCXGXG motif repeat units lie at residues 169–176 (CKECNGSG), 185–192 (CQTCHGSG), 211–218 (CPTCGGEG), and 225–232 (CTACYGEG). The segment at 377–401 (AFSPSGSNNDKEEKSFFEKARDIFS) is disordered. Positions 385–401 (NDKEEKSFFEKARDIFS) are enriched in basic and acidic residues.

This sequence belongs to the DnaJ family. In terms of assembly, homodimer. Zn(2+) serves as cofactor.

Its subcellular location is the cytoplasm. Participates actively in the response to hyperosmotic and heat shock by preventing the aggregation of stress-denatured proteins and by disaggregating proteins, also in an autonomous, DnaK-independent fashion. Unfolded proteins bind initially to DnaJ; upon interaction with the DnaJ-bound protein, DnaK hydrolyzes its bound ATP, resulting in the formation of a stable complex. GrpE releases ADP from DnaK; ATP binding to DnaK triggers the release of the substrate protein, thus completing the reaction cycle. Several rounds of ATP-dependent interactions between DnaJ, DnaK and GrpE are required for fully efficient folding. Also involved, together with DnaK and GrpE, in the DNA replication of plasmids through activation of initiation proteins. This is Chaperone protein DnaJ from Chlorobium limicola (strain DSM 245 / NBRC 103803 / 6330).